Reading from the N-terminus, the 1120-residue chain is Vacuolar cation-chloride cotransporter 1 (1120 aa).

The interval 1-21 (MVSRFYQIPGTHRPSSAISSS) is disordered. Over 1-62 (MVSRFYQIPG…YDPDNPNKDK (62 aa)) the chain is Cytoplasmic. Serine 34 is modified (phosphoserine). A helical membrane pass occupies residues 63–83 (LGTYDGVFVPTALNVLSILMF). At 84 to 85 (LR) the chain is on the vacuolar side. A helical membrane pass occupies residues 86 to 106 (FGFILGQLGIICTIGLLLLSY). Residues 107–145 (TINLLTTLSISAISTNGTVRGGGAYYMISRSLGPEFGGS) are Cytoplasmic-facing. A helical membrane pass occupies residues 146 to 166 (IGLVFFLGQVFNAGMNAVGII). Residues 167-193 (EPLLYNLGYSAQGEPPAALGELLPRGH) are Vacuolar-facing. A helical membrane pass occupies residues 194-214 (WHEFTYATVILFLCFSVAFVG). The Cytoplasmic segment spans residues 215–221 (SQTVSRA). Residues 222 to 242 (GNILFLVLAASIFSIPLSALI) form a helical membrane-spanning segment. The Vacuolar segment spans residues 243–283 (RSPFTEGGISYTGPSWQTFHDNLLPHLTKGAAGSLLKGKET). A helical transmembrane segment spans residues 284–304 (FNDLFGVFFPATAGIFAGAGM). The Cytoplasmic segment spans residues 305-317 (SSELRKPSKSIPK). A helical membrane pass occupies residues 318 to 338 (GTLWGLLFTFICYAVVVFSMG). The Vacuolar portion of the chain corresponds to 339–360 (CSIPRRSLYDEVQIIQTISSVQ). Residues 361–381 (WVIFMGEMATSLFSIIVGMLG) form a helical membrane-spanning segment. The Cytoplasmic portion of the chain corresponds to 382–393 (AAYVLEAIAKDN). Residues 394 to 414 (IIPGLEIFAHSPLYSLIFTWI) form a helical membrane-spanning segment. The Vacuolar segment spans residues 415–430 (LTQLCLFSDVNKIATF). A helical membrane pass occupies residues 431–451 (ITMTFLMTFVVMNLACFLLGI). Topologically, residues 452–462 (SSAPNFRPSFK) are cytoplasmic. The chain crosses the membrane as a helical span at residues 463-482 (YFNRYTTAIGALLSVVAMLI). Topologically, residues 483-487 (VDGIS) are vacuolar. The chain crosses the membrane as a helical span at residues 488-506 (ASVLFLAMILLFLFIHYFS). The Cytoplasmic segment spans residues 507–1120 (PPKSWGDVSQ…SQTMTVTTAL (614 aa)). A phosphoserine mark is found at serine 654, serine 915, and serine 918.

Belongs to the SLC12A transporter family.

Its subcellular location is the vacuole membrane. Catalyzes the coordinated symport of chloride with potassium ions across the vacuolar membrane. Involved in vacuolar osmoregulation. The protein is Vacuolar cation-chloride cotransporter 1 of Saccharomyces cerevisiae (strain ATCC 204508 / S288c) (Baker's yeast).